The chain runs to 320 residues: Pseudouridine-5'-phosphate glycosidase (320 aa).

The Proton donor role is filled by glutamate 25. Residues lysine 85 and valine 105 each coordinate substrate. Residue aspartate 137 participates in Mn(2+) binding. 139–141 is a binding site for substrate; it reads SAD. Residue lysine 158 is the Nucleophile of the active site.

It belongs to the pseudouridine-5'-phosphate glycosidase family. Homotrimer. Mn(2+) serves as cofactor.

The enzyme catalyses D-ribose 5-phosphate + uracil = psi-UMP + H2O. Its function is as follows. Catalyzes the reversible cleavage of pseudouridine 5'-phosphate (PsiMP) to ribose 5-phosphate and uracil. Functions biologically in the cleavage direction, as part of a pseudouridine degradation pathway. This is Pseudouridine-5'-phosphate glycosidase from Rhodospirillum centenum (strain ATCC 51521 / SW).